A 341-amino-acid chain; its full sequence is Anthranilate phosphoribosyltransferase (341 aa).

5-phospho-alpha-D-ribose 1-diphosphate-binding positions include Gly85, 88–89 (GD), Thr93, 95–98 (NIST), 113–121 (KHGNRSASG), and Ser125. Gly85 contacts anthranilate. Ser97 contributes to the Mg(2+) binding site. An anthranilate-binding site is contributed by Asn116. Anthranilate is bound at residue Arg171. Mg(2+) contacts are provided by Asp230 and Glu231.

Belongs to the anthranilate phosphoribosyltransferase family. As to quaternary structure, homodimer. The cofactor is Mg(2+).

The enzyme catalyses N-(5-phospho-beta-D-ribosyl)anthranilate + diphosphate = 5-phospho-alpha-D-ribose 1-diphosphate + anthranilate. It functions in the pathway amino-acid biosynthesis; L-tryptophan biosynthesis; L-tryptophan from chorismate: step 2/5. Functionally, catalyzes the transfer of the phosphoribosyl group of 5-phosphorylribose-1-pyrophosphate (PRPP) to anthranilate to yield N-(5'-phosphoribosyl)-anthranilate (PRA). The sequence is that of Anthranilate phosphoribosyltransferase from Prochlorococcus marinus (strain SARG / CCMP1375 / SS120).